We begin with the raw amino-acid sequence, 146 residues long: Hemoglobin subunit beta (146 aa).

Valine 1 bears the N-acetylvaline mark. Positions 2–146 (HLTAEEKSAV…VATALAHKYH (145 aa)) constitute a Globin domain. Threonine 12 carries the post-translational modification Phosphothreonine. Serine 44 is modified (phosphoserine). Lysine 59 is subject to N6-acetyllysine. Histidine 63 contributes to the heme b binding site. An N6-acetyllysine modification is found at lysine 82. Histidine 92 contributes to the heme b binding site. Cysteine 93 is modified (S-nitrosocysteine). Lysine 144 carries the post-translational modification N6-acetyllysine.

Belongs to the globin family. Heterotetramer of two alpha chains and two beta chains. Red blood cells.

Involved in oxygen transport from the lung to the various peripheral tissues. This chain is Hemoglobin subunit beta (HBB), found in Cebus albifrons (White-fronted capuchin).